The following is a 150-amino-acid chain: Cytochrome c oxidase subunit 5A, mitochondrial (150 aa).

Residues M1–Y41 constitute a mitochondrion transit peptide. The SIFI-degron motif lies at L2–A17. N6-acetyllysine occurs at positions 87 and 113. The residue at position 141 (T141) is a Phosphothreonine.

It belongs to the cytochrome c oxidase subunit 5A family. In terms of assembly, component of the cytochrome c oxidase (complex IV, CIV), a multisubunit enzyme composed of 14 subunits. The complex is composed of a catalytic core of 3 subunits MT-CO1, MT-CO2 and MT-CO3, encoded in the mitochondrial DNA, and 11 supernumerary subunits COX4I, COX5A, COX5B, COX6A, COX6B, COX6C, COX7A, COX7B, COX7C, COX8 and NDUFA4, which are encoded in the nuclear genome. The complex exists as a monomer or a dimer and forms supercomplexes (SCs) in the inner mitochondrial membrane with NADH-ubiquinone oxidoreductase (complex I, CI) and ubiquinol-cytochrome c oxidoreductase (cytochrome b-c1 complex, complex III, CIII), resulting in different assemblies (supercomplex SCI(1)III(2)IV(1) and megacomplex MCI(2)III(2)IV(2)). Interacts with AFG1L. Interacts with RAB5IF. In response to mitochondrial stress, the precursor protein is ubiquitinated by the SIFI complex in the cytoplasm before mitochondrial import, leading to its degradation. Within the SIFI complex, UBR4 initiates ubiquitin chain that are further elongated or branched by KCMF1.

It localises to the mitochondrion inner membrane. It participates in energy metabolism; oxidative phosphorylation. Component of the cytochrome c oxidase, the last enzyme in the mitochondrial electron transport chain which drives oxidative phosphorylation. The respiratory chain contains 3 multisubunit complexes succinate dehydrogenase (complex II, CII), ubiquinol-cytochrome c oxidoreductase (cytochrome b-c1 complex, complex III, CIII) and cytochrome c oxidase (complex IV, CIV), that cooperate to transfer electrons derived from NADH and succinate to molecular oxygen, creating an electrochemical gradient over the inner membrane that drives transmembrane transport and the ATP synthase. Cytochrome c oxidase is the component of the respiratory chain that catalyzes the reduction of oxygen to water. Electrons originating from reduced cytochrome c in the intermembrane space (IMS) are transferred via the dinuclear copper A center (CU(A)) of subunit 2 and heme A of subunit 1 to the active site in subunit 1, a binuclear center (BNC) formed by heme A3 and copper B (CU(B)). The BNC reduces molecular oxygen to 2 water molecules using 4 electrons from cytochrome c in the IMS and 4 protons from the mitochondrial matrix. The sequence is that of Cytochrome c oxidase subunit 5A, mitochondrial (COX5A) from Cebuella pygmaea (Pygmy marmoset).